The primary structure comprises 397 residues: Fractalkine (397 aa).

Positions 1–24 are cleaved as a signal peptide; that stretch reads MAPISLSWLLRLATFCHLTVLLAG. Residues 25–100 are chemokine and involved in interaction with ITGAV:ITGB3 and ITGA4:ITGB1; that stretch reads QHHGVTKCNI…RQAAALTRNG (76 aa). The Extracellular segment spans residues 25–341; it reads QHHGVTKCNI…PDAQAATRRQ (317 aa). Intrachain disulfides connect C32–C58 and C36–C74. N-linked (GlcNAc...) asparagine glycosylation occurs at N33. The segment at 101-341 is mucin-like stalk; the sequence is GTFEKQIGEV…PDAQAATRRQ (241 aa). Disordered regions lie at residues 128–265 and 289–309; these read EPEA…REEM and VPVSSEGTPSREPVASGSWTP. Residues 133–147 show a composition bias toward polar residues; the sequence is GESSSLEPTPSSQEA. A glycan (O-linked (GalNAc...) threonine) is linked at T183. The segment covering 193 to 202 has biased composition (polar residues); the sequence is TAATWQSSAP. Positions 219–243 are enriched in low complexity; sequence PSTQDPSTQASTASSPAPEENAPSE. An O-linked (GalNAc...) serine glycan is attached at S253. T329 carries an O-linked (GalNAc...) threonine glycan. The chain crosses the membrane as a helical span at residues 342–362; it reads AVGLLAFLGLLFCLGVAMFTY. Residues 363–397 are Cytoplasmic-facing; it reads QSLQGCPRKMAGEMAEGLRYIPRSCGSNSYVLVPV.

This sequence belongs to the intercrine delta family. As to quaternary structure, monomer. Forms a ternary complex with CX3CR1 and ITGAV:ITGB3 or ITGA4:ITGB1. (Microbial infection) Interacts with pox virus crmD; this inhibits cell migration mediated by CX3CL1. In terms of assembly, (Microbial infection) Interacts (via N-terminus) with human cytomegalovirus (HHV-5) US28. As to quaternary structure, (Microbial infection) Interacts with P.falciparum (strain 3D7) CBP1 and CBP2 (via their extracellular domains); the interaction mediates the adhesion of infected erythrocytes with endothelial cells. Post-translationally, a soluble short 95 kDa form may be released by proteolytic cleavage from the long membrane-anchored form. In terms of processing, O-glycosylated with core 1 or possibly core 8 glycans. In terms of tissue distribution, expressed in the seminal plasma, endometrial fluid and follicular fluid (at protein level). Small intestine, colon, testis, prostate, heart, brain, lung, skeletal muscle, kidney and pancreas. Most abundant in the brain and heart.

It is found in the cell membrane. The protein localises to the secreted. Its function is as follows. Chemokine that acts as a ligand for both CX3CR1 and integrins ITGAV:ITGB3 and ITGA4:ITGB1. The CX3CR1-CX3CL1 signaling exerts distinct functions in different tissue compartments, such as immune response, inflammation, cell adhesion and chemotaxis. Regulates leukocyte adhesion and migration processes at the endothelium. Can activate integrins in both a CX3CR1-dependent and CX3CR1-independent manner. In the presence of CX3CR1, activates integrins by binding to the classical ligand-binding site (site 1) in integrins. In the absence of CX3CR1, binds to a second site (site 2) in integrins which is distinct from site 1 and enhances the binding of other integrin ligands to site 1. In terms of biological role, the soluble form is chemotactic for T-cells and monocytes, but not for neutrophils. The membrane-bound form promotes adhesion of those leukocytes to endothelial cells. Functionally, (Microbial infection) Mediates the cytoadherence of erythrocytes infected with parasite P.falciparum (strain 3D7) with endothelial cells by interacting with P.falciparum CBP1 and CBP2 expressed at the surface of erythrocytes. The adhesion prevents the elimination of infected erythrocytes by the spleen. In Homo sapiens (Human), this protein is Fractalkine.